The following is a 446-amino-acid chain: BAG family molecular chaperone regulator 7 (446 aa).

The interval 230 to 252 (TGGEKKKKHEEKEKKEKIETKSK) is disordered. Basic and acidic residues predominate over residues 239–250 (EEKEKKEKIETK). Residues 303–332 (PEYAAVMIQRAFKAYLIRRSKSLRALRDLA) enclose the IQ domain. Residues 330 to 407 (DLAIAKTKLK…AMLDVVDPQP (78 aa)) form the BAG domain. T443 bears the Phosphothreonine mark.

Binds to the ATPase domain of HSP70/HSC70 chaperones. Interacts with HSP70-11/BIP2.

The protein localises to the endoplasmic reticulum. Functionally, co-chaperone that regulates diverse cellular pathways, such as programmed cell death and stress responses. Necessary for the proper maintenance of the unfolded protein response (UPR) during heat and cold tolerance. The polypeptide is BAG family molecular chaperone regulator 7 (BAG7) (Arabidopsis thaliana (Mouse-ear cress)).